Consider the following 461-residue polypeptide: Glutamate--tRNA ligase (461 aa).

The 'HIGH' region signature appears at 8 to 18; that stretch reads PSPTGYLHIGG. The short motif at 240–244 is the 'KMSKS' region element; sequence KMSKR. An ATP-binding site is contributed by Lys-243.

It belongs to the class-I aminoacyl-tRNA synthetase family. Glutamate--tRNA ligase type 1 subfamily. In terms of assembly, monomer.

It localises to the cytoplasm. The catalysed reaction is tRNA(Glu) + L-glutamate + ATP = L-glutamyl-tRNA(Glu) + AMP + diphosphate. In terms of biological role, catalyzes the attachment of glutamate to tRNA(Glu) in a two-step reaction: glutamate is first activated by ATP to form Glu-AMP and then transferred to the acceptor end of tRNA(Glu). This chain is Glutamate--tRNA ligase, found in Chromobacterium violaceum (strain ATCC 12472 / DSM 30191 / JCM 1249 / CCUG 213 / NBRC 12614 / NCIMB 9131 / NCTC 9757 / MK).